Consider the following 564-residue polypeptide: Proline--tRNA ligase (564 aa).

Belongs to the class-II aminoacyl-tRNA synthetase family. ProS type 1 subfamily. As to quaternary structure, homodimer.

It is found in the cytoplasm. It catalyses the reaction tRNA(Pro) + L-proline + ATP = L-prolyl-tRNA(Pro) + AMP + diphosphate. Functionally, catalyzes the attachment of proline to tRNA(Pro) in a two-step reaction: proline is first activated by ATP to form Pro-AMP and then transferred to the acceptor end of tRNA(Pro). As ProRS can inadvertently accommodate and process non-cognate amino acids such as alanine and cysteine, to avoid such errors it has two additional distinct editing activities against alanine. One activity is designated as 'pretransfer' editing and involves the tRNA(Pro)-independent hydrolysis of activated Ala-AMP. The other activity is designated 'posttransfer' editing and involves deacylation of mischarged Ala-tRNA(Pro). The misacylated Cys-tRNA(Pro) is not edited by ProRS. The chain is Proline--tRNA ligase from Coxiella burnetii (strain RSA 331 / Henzerling II).